The chain runs to 158 residues: MITVPHSRKVELDEIDRAILRLLQEDGRMSYSEISRRINVPESTVRARVNRLVKEGVIRKFAALINPFKAGYEIVAFIAVDAEPAKVKQVVEELAKFPEVDVLGIVTGAHDIFMQVTVKDLQELERFILEKMAKIDGIKSTETSILTSVKKWGYARVF.

Residues 12-73 form the HTH asnC-type domain; the sequence is LDEIDRAILR…LINPFKAGYE (62 aa). The segment at residues 31–50 is a DNA-binding region (H-T-H motif); it reads YSEISRRINVPESTVRARVN.

This is an uncharacterized protein from Pyrococcus horikoshii (strain ATCC 700860 / DSM 12428 / JCM 9974 / NBRC 100139 / OT-3).